Here is a 212-residue protein sequence, read N- to C-terminus: Probable U3 small nucleolar RNA-associated protein 11 (212 aa).

It belongs to the UTP11 family. In terms of assembly, component of the ribosomal small subunit (SSU) processome.

It localises to the nucleus. It is found in the nucleolus. In terms of biological role, involved in nucleolar processing of pre-18S ribosomal RNA. This is Probable U3 small nucleolar RNA-associated protein 11 from Plasmodium falciparum (isolate 3D7).